Consider the following 171-residue polypeptide: Shikimate kinase (171 aa).

An ATP-binding site is contributed by 14-19; that stretch reads GAGKST. Ser18 is a binding site for Mg(2+). Substrate-binding residues include Asp36, Arg60, and Gly82. Position 120 (Arg120) interacts with ATP. Position 139 (Arg139) interacts with substrate. Residue Gln156 participates in ATP binding.

This sequence belongs to the shikimate kinase family. As to quaternary structure, monomer. Mg(2+) is required as a cofactor.

It localises to the cytoplasm. The catalysed reaction is shikimate + ATP = 3-phosphoshikimate + ADP + H(+). The protein operates within metabolic intermediate biosynthesis; chorismate biosynthesis; chorismate from D-erythrose 4-phosphate and phosphoenolpyruvate: step 5/7. Functionally, catalyzes the specific phosphorylation of the 3-hydroxyl group of shikimic acid using ATP as a cosubstrate. The sequence is that of Shikimate kinase from Shewanella frigidimarina (strain NCIMB 400).